Consider the following 530-residue polypeptide: 2,3-bisphosphoglycerate-independent phosphoglycerate mutase (530 aa).

Residues Asp-15 and Ser-65 each contribute to the Mn(2+) site. Ser-65 (phosphoserine intermediate) is an active-site residue. Substrate contacts are provided by residues His-126, Arg-155 to Asp-156, Arg-187, Arg-193, Arg-257 to Arg-260, and Lys-330. 5 residues coordinate Mn(2+): Asp-397, His-401, Asp-438, His-439, and His-456.

This sequence belongs to the BPG-independent phosphoglycerate mutase family. As to quaternary structure, monomer. Requires Mn(2+) as cofactor.

The catalysed reaction is (2R)-2-phosphoglycerate = (2R)-3-phosphoglycerate. Its pathway is carbohydrate degradation; glycolysis; pyruvate from D-glyceraldehyde 3-phosphate: step 3/5. Catalyzes the interconversion of 2-phosphoglycerate and 3-phosphoglycerate. In Synechococcus sp. (strain JA-3-3Ab) (Cyanobacteria bacterium Yellowstone A-Prime), this protein is 2,3-bisphosphoglycerate-independent phosphoglycerate mutase.